Consider the following 1219-residue polypeptide: Myosin-5 (1219 aa).

The span at 1–12 (MAILKRGARKKV) shows a compositional bias: basic residues. A disordered region spans residues 1–20 (MAILKRGARKKVHQEPAKRS). The Myosin motor domain occupies 36-715 (VGVSDLTLLS…TLFALEHMRD (680 aa)). 129 to 136 (GESGAGKT) lines the ATP pocket. Phosphoserine is present on S357. A Phosphotyrosine modification is found at Y359. The actin-binding stretch occupies residues 404 to 486 (SIGILDIYGF…PGIFAAMNDS (83 aa)). IQ domains follow at residues 719-739 (HNMA…RIDA) and 740-765 (ATKI…YGTK). The region spanning 771 to 961 (KERRSMSLLG…TISVRRGNPP (191 aa)) is the TH1 domain. S777 bears the Phosphoserine mark. Positions 951–964 (STISVRRGNPPNSQ) are enriched in polar residues. 2 disordered regions span residues 951 to 1106 (STIS…SELP) and 1139 to 1167 (TAYM…VLNS). Residues 974–984 (SISSGYHASSS) show a composition bias toward low complexity. A Phosphoserine modification is found at S992. Residues 1030–1041 (NPASTLTASQSN) show a composition bias toward polar residues. Residues 1048–1063 (TAATRATPAATPAAAA) are compositionally biased toward low complexity. Over residues 1072-1083 (IPPPPPPPPPSS) the composition is skewed to pro residues. The region spanning 1085–1147 (PKEPMFEAAY…PTAYMKPHSG (63 aa)) is the SH3 domain. A Phosphoserine modification is found at S1205.

The protein belongs to the TRAFAC class myosin-kinesin ATPase superfamily. Myosin family. In terms of assembly, interacts (via myosin motor domain) with SHE4; this interaction is important for proper localization and may regulate the interaction of the motor domain with actin. Interacts (via SH3 domain) with VRP1; this interaction is required for localization to sites of polarized growth and may regulate the interaction of the tail domain with actin. Interacts (via SH3 domain) with PAN1; this interaction is important for late stages of endocytopsis. Interacts (via SH3 domain) with BBC1 and LAS17. Interacts (via C-terminal acidic tail) with ARC19 and ARC40; ARC19 and ARC40 are Arp2/3 complex subunits. Interacts with BZZ1, PKH1, PKH2, YPK1 and YPK2. Post-translationally, phosphorylation of the TEDS site (Ser-357) is required for the polarization of the actin cytoskeleton and for ligand-induced, but not for constitutive internalization of STE2. Phosphorylation probably activates the myosin-I ATPase activity. Ser-357 is phosphorylated by YPK2 in vitro.

It is found in the cytoplasm. Its subcellular location is the cytoskeleton. The protein localises to the actin patch. Functionally, one of two redundant type-I myosins implicated in the organization of the actin cytoskeleton. Required for proper actin cytoskeleton polarization and for the internalization step in endocytosis. At the cell cortex, assembles in patch-like structures together with proteins from the actin-polymerizing machinery and promotes actin assembly. Functions redundantly with LAS17 as actin nucleation-promoting factor (NPF) for the Arp2/3 complex. Motor domain phosphorylation by PAK kinases CLA4 and STE20 promotes CDC42-regulated actin assembly. Functions together with the NPF PAN1 in late stages of endocytosis. Motor domain phosphorylation by PDK1 kinases PKH1 and PKH2, and by SGK kinases YPK1 and YPK2, promotes ligand-induced, but not constitutive endocytosis of the G protein-coupled receptor STE2. The sequence is that of Myosin-5 (MYO5) from Saccharomyces cerevisiae (strain YJM789) (Baker's yeast).